Reading from the N-terminus, the 202-residue chain is Guanylate kinase (202 aa).

The Guanylate kinase-like domain maps to 18 to 200 (LKPVVVFGPS…AYKQLEAICL (183 aa)). Residue 25–32 (GPSGVGKS) participates in ATP binding.

It belongs to the guanylate kinase family.

It catalyses the reaction GMP + ATP = GDP + ADP. Its function is as follows. Essential for recycling GMP and indirectly, cGMP. The polypeptide is Guanylate kinase (Schizosaccharomyces pombe (strain 972 / ATCC 24843) (Fission yeast)).